The following is a 556-amino-acid chain: Oxygen-dependent choline dehydrogenase (556 aa).

Position 4–33 (4–33) interacts with FAD; the sequence is DYIIIGAGSAGNVLATRLTEDPNTSVLLLE. Histidine 473 serves as the catalytic Proton acceptor.

This sequence belongs to the GMC oxidoreductase family. It depends on FAD as a cofactor.

The enzyme catalyses choline + A = betaine aldehyde + AH2. It catalyses the reaction betaine aldehyde + NAD(+) + H2O = glycine betaine + NADH + 2 H(+). It participates in amine and polyamine biosynthesis; betaine biosynthesis via choline pathway; betaine aldehyde from choline (cytochrome c reductase route): step 1/1. Involved in the biosynthesis of the osmoprotectant glycine betaine. Catalyzes the oxidation of choline to betaine aldehyde and betaine aldehyde to glycine betaine at the same rate. The sequence is that of Oxygen-dependent choline dehydrogenase from Escherichia coli O139:H28 (strain E24377A / ETEC).